The following is a 316-amino-acid chain: Pantothenate kinase (316 aa).

95–102 (GSVAVGKS) contacts ATP.

The protein belongs to the prokaryotic pantothenate kinase family.

The protein localises to the cytoplasm. The enzyme catalyses (R)-pantothenate + ATP = (R)-4'-phosphopantothenate + ADP + H(+). It participates in cofactor biosynthesis; coenzyme A biosynthesis; CoA from (R)-pantothenate: step 1/5. The protein is Pantothenate kinase of Salmonella gallinarum (strain 287/91 / NCTC 13346).